We begin with the raw amino-acid sequence, 331 residues long: Olfactory receptor 6S1 (331 aa).

The Extracellular portion of the chain corresponds to 1 to 29; that stretch reads MSPDGNHSSDPTEFVLAGLPNLNSARVEL. A glycan (N-linked (GlcNAc...) asparagine) is linked at Asn6. Residues 30 to 50 traverse the membrane as a helical segment; sequence FSVFLLVYLLNLTGNVLIVGV. Residues 51 to 59 lie on the Cytoplasmic side of the membrane; it reads VRADTRLQT. The chain crosses the membrane as a helical span at residues 60 to 80; that stretch reads PMYFFLGNLSCLEILLTSVII. The Extracellular portion of the chain corresponds to 81-99; the sequence is PKMLSNFLSRQHTISFAAC. Cys99 and Cys182 are disulfide-bonded. Residues 100–120 traverse the membrane as a helical segment; it reads ITQFYFYFFLGASEFLLLAVM. Residues 121-147 are Cytoplasmic-facing; the sequence is SADRYLAICHPLRYPLLMSGAVCFRVA. A helical transmembrane segment spans residues 148–168; the sequence is LACWVGGLVPVLGPTVAVALL. Over 169 to 207 the chain is Extracellular; sequence PFCKQGAVVQHFFCDSGPLLRLACTNTKKLEETDFVLAS. A helical membrane pass occupies residues 208-228; that stretch reads LVIVSSLLITAVSYGLIVLAV. The Cytoplasmic portion of the chain corresponds to 229–242; that stretch reads LSIPSASGRQKAFS. The helical transmembrane segment at 243–263 threads the bilayer; it reads TCTSHLIVVTLFYGSAIFLYV. Residues 264–274 are Extracellular-facing; that stretch reads RPSQSGSVDTN. A helical transmembrane segment spans residues 275 to 295; sequence WAVTVITTFVTPLLNPFIYAL. Residues 296 to 331 lie on the Cytoplasmic side of the membrane; the sequence is RNEQVKEALKDMFRKVVAGVLGNLLLDKCLSEKAVK.

The protein belongs to the G-protein coupled receptor 1 family.

It is found in the cell membrane. Odorant receptor. This is Olfactory receptor 6S1 (OR6S1) from Homo sapiens (Human).